The following is a 105-amino-acid chain: Urease subunit beta (105 aa).

It belongs to the urease beta subunit family. Heterotrimer of UreA (gamma), UreB (beta) and UreC (alpha) subunits. Three heterotrimers associate to form the active enzyme.

The protein resides in the cytoplasm. It catalyses the reaction urea + 2 H2O + H(+) = hydrogencarbonate + 2 NH4(+). It functions in the pathway nitrogen metabolism; urea degradation; CO(2) and NH(3) from urea (urease route): step 1/1. In Pseudomonas entomophila (strain L48), this protein is Urease subunit beta.